Here is a 557-residue protein sequence, read N- to C-terminus: Formate--tetrahydrofolate ligase (557 aa).

Position 66 to 73 (66 to 73 (TPAGEGKS)) interacts with ATP.

The protein belongs to the formate--tetrahydrofolate ligase family.

The enzyme catalyses (6S)-5,6,7,8-tetrahydrofolate + formate + ATP = (6R)-10-formyltetrahydrofolate + ADP + phosphate. Its pathway is one-carbon metabolism; tetrahydrofolate interconversion. This chain is Formate--tetrahydrofolate ligase, found in Clostridium botulinum (strain 657 / Type Ba4).